The primary structure comprises 482 residues: uncharacterized protein (482 aa).

Low complexity-rich tracts occupy residues 24–86 (SPNS…AQQQ) and 312–339 (TDSLCSSSTSTPSFNSTSSSSKNQSQSI). Disordered regions lie at residues 24 to 88 (SPNS…QQHY) and 307 to 376 (LHSQ…LIGK). Residues 342–363 (EEEEDGGEDEEEEGGEDNDNES) are compositionally biased toward acidic residues.

This is an uncharacterized protein from Dictyostelium discoideum (Social amoeba).